The chain runs to 691 residues: Elongation factor G (691 aa).

The tr-type G domain occupies Glu8 to Val283. Residues Ala17–Thr24, Asp81–His85, and Asn135–Asp138 contribute to the GTP site.

It belongs to the TRAFAC class translation factor GTPase superfamily. Classic translation factor GTPase family. EF-G/EF-2 subfamily.

It is found in the cytoplasm. Catalyzes the GTP-dependent ribosomal translocation step during translation elongation. During this step, the ribosome changes from the pre-translocational (PRE) to the post-translocational (POST) state as the newly formed A-site-bound peptidyl-tRNA and P-site-bound deacylated tRNA move to the P and E sites, respectively. Catalyzes the coordinated movement of the two tRNA molecules, the mRNA and conformational changes in the ribosome. The chain is Elongation factor G from Methylorubrum populi (strain ATCC BAA-705 / NCIMB 13946 / BJ001) (Methylobacterium populi).